The sequence spans 256 residues: Protein FixA (256 aa).

Belongs to the ETF beta-subunit/FixA family. Heterodimer of FixA and FixB.

The protein operates within amine and polyamine metabolism; carnitine metabolism. Functionally, required for anaerobic carnitine reduction. May bring reductant to CaiA. In Shigella flexneri serotype 5b (strain 8401), this protein is Protein FixA.